The following is a 37-amino-acid chain: Cytochrome b6-f complex subunit 5 (37 aa).

The chain crosses the membrane as a helical span at residues 5 to 25 (LLSGIVLGLIPITLVGLFVTA).

Belongs to the PetG family. The 4 large subunits of the cytochrome b6-f complex are cytochrome b6, subunit IV (17 kDa polypeptide, PetD), cytochrome f and the Rieske protein, while the 4 small subunits are PetG, PetL, PetM and PetN. The complex functions as a dimer.

It is found in the plastid. It localises to the chloroplast thylakoid membrane. Component of the cytochrome b6-f complex, which mediates electron transfer between photosystem II (PSII) and photosystem I (PSI), cyclic electron flow around PSI, and state transitions. PetG is required for either the stability or assembly of the cytochrome b6-f complex. This chain is Cytochrome b6-f complex subunit 5, found in Welwitschia mirabilis (Tree tumbo).